Reading from the N-terminus, the 325-residue chain is Cytochrome f (325 aa).

An N-terminal signal peptide occupies residues 1–40; it reads MKTPELMAIWQRLKTACLVAIATFGLFFASDVLFPQAAAA. Tyrosine 41, cysteine 62, cysteine 65, and histidine 66 together coordinate heme. The helical transmembrane segment at 290–309 threads the bilayer; it reads IYGYMAFVAGIMLTQIFLVL.

The protein belongs to the cytochrome f family. As to quaternary structure, the 4 large subunits of the cytochrome b6-f complex are cytochrome b6, subunit IV (17 kDa polypeptide, PetD), cytochrome f and the Rieske protein, while the 4 small subunits are PetG, PetL, PetM and PetN. The complex functions as a dimer. Heme is required as a cofactor.

The protein localises to the cellular thylakoid membrane. Component of the cytochrome b6-f complex, which mediates electron transfer between photosystem II (PSII) and photosystem I (PSI), cyclic electron flow around PSI, and state transitions. This is Cytochrome f (petA) from Picosynechococcus sp. (strain ATCC 27264 / PCC 7002 / PR-6) (Agmenellum quadruplicatum).